Consider the following 117-residue polypeptide: Large ribosomal subunit protein bL19 (117 aa).

The protein belongs to the bacterial ribosomal protein bL19 family.

Functionally, this protein is located at the 30S-50S ribosomal subunit interface and may play a role in the structure and function of the aminoacyl-tRNA binding site. The polypeptide is Large ribosomal subunit protein bL19 (Sorangium cellulosum (strain So ce56) (Polyangium cellulosum (strain So ce56))).